Consider the following 38-residue polypeptide: Photosystem II reaction center protein L (38 aa).

The chain crosses the membrane as a helical span at residues 17 to 37; it reads SLYWGLLLIFVLAVLFSNYFF.

The protein belongs to the PsbL family. As to quaternary structure, PSII is composed of 1 copy each of membrane proteins PsbA, PsbB, PsbC, PsbD, PsbE, PsbF, PsbH, PsbI, PsbJ, PsbK, PsbL, PsbM, PsbT, PsbX, PsbY, PsbZ, Psb30/Ycf12, at least 3 peripheral proteins of the oxygen-evolving complex and a large number of cofactors. It forms dimeric complexes.

It is found in the plastid. It localises to the chloroplast thylakoid membrane. Its function is as follows. One of the components of the core complex of photosystem II (PSII). PSII is a light-driven water:plastoquinone oxidoreductase that uses light energy to abstract electrons from H(2)O, generating O(2) and a proton gradient subsequently used for ATP formation. It consists of a core antenna complex that captures photons, and an electron transfer chain that converts photonic excitation into a charge separation. This subunit is found at the monomer-monomer interface and is required for correct PSII assembly and/or dimerization. This Huperzia lucidula (Shining clubmoss) protein is Photosystem II reaction center protein L.